The sequence spans 143 residues: Ribonuclease HI (143 aa).

Residues 1-136 enclose the RNase H type-1 domain; it reads MQEIEIFCDG…CNSLAKLEAQ (136 aa). The Mg(2+) site is built by D9, E47, D69, and N128.

Belongs to the RNase H family. In terms of assembly, monomer. Requires Mg(2+) as cofactor.

Its subcellular location is the cytoplasm. It carries out the reaction Endonucleolytic cleavage to 5'-phosphomonoester.. In terms of biological role, endonuclease that specifically degrades the RNA of RNA-DNA hybrids. The protein is Ribonuclease HI (rnhA) of Helicobacter pylori (strain J99 / ATCC 700824) (Campylobacter pylori J99).